Reading from the N-terminus, the 361-residue chain is Phospho-N-acetylmuramoyl-pentapeptide-transferase (361 aa).

10 consecutive transmembrane segments (helical) span residues 27–47 (GAFF…INLL), 72–92 (TPTM…LLWA), 98–118 (YVWL…MDDF), 135–155 (LAMG…LHPE), 169–189 (TLIN…AGSA), 200–220 (GLAI…AYAV), 240–260 (IFVF…YNAP), 263–283 (AVFM…AIAV), 289–309 (IVLV…IIQV), and 338–358 (QIVI…LATL).

This sequence belongs to the glycosyltransferase 4 family. MraY subfamily. Mg(2+) is required as a cofactor.

The protein resides in the cell inner membrane. The enzyme catalyses UDP-N-acetyl-alpha-D-muramoyl-L-alanyl-gamma-D-glutamyl-meso-2,6-diaminopimeloyl-D-alanyl-D-alanine + di-trans,octa-cis-undecaprenyl phosphate = di-trans,octa-cis-undecaprenyl diphospho-N-acetyl-alpha-D-muramoyl-L-alanyl-D-glutamyl-meso-2,6-diaminopimeloyl-D-alanyl-D-alanine + UMP. Its pathway is cell wall biogenesis; peptidoglycan biosynthesis. In terms of biological role, catalyzes the initial step of the lipid cycle reactions in the biosynthesis of the cell wall peptidoglycan: transfers peptidoglycan precursor phospho-MurNAc-pentapeptide from UDP-MurNAc-pentapeptide onto the lipid carrier undecaprenyl phosphate, yielding undecaprenyl-pyrophosphoryl-MurNAc-pentapeptide, known as lipid I. The protein is Phospho-N-acetylmuramoyl-pentapeptide-transferase of Dinoroseobacter shibae (strain DSM 16493 / NCIMB 14021 / DFL 12).